Reading from the N-terminus, the 214-residue chain is tRNA (guanine-N(7)-)-methyltransferase (214 aa).

Positions 43, 68, 95, and 117 each coordinate S-adenosyl-L-methionine. Asp117 is an active-site residue. Substrate contacts are provided by residues Lys121, Asp153, and 190–193 (TEYE).

Belongs to the class I-like SAM-binding methyltransferase superfamily. TrmB family.

The catalysed reaction is guanosine(46) in tRNA + S-adenosyl-L-methionine = N(7)-methylguanosine(46) in tRNA + S-adenosyl-L-homocysteine. The protein operates within tRNA modification; N(7)-methylguanine-tRNA biosynthesis. In terms of biological role, catalyzes the formation of N(7)-methylguanine at position 46 (m7G46) in tRNA. The chain is tRNA (guanine-N(7)-)-methyltransferase from Staphylococcus haemolyticus (strain JCSC1435).